The sequence spans 624 residues: Phosphomethylpyrimidine synthase (624 aa).

Residues 48–70 (SDTHTSQGREKNPPLTVYDTSGP) are disordered. Residues N229, M258, Y287, H323, 343–345 (SRG), 384–387 (DGLR), and E423 each bind substrate. Zn(2+) is bound at residue H427. Residue Y450 coordinates substrate. Residue H491 coordinates Zn(2+). Residues C571, C574, and C579 each coordinate [4Fe-4S] cluster.

It belongs to the ThiC family. Homodimer. The cofactor is [4Fe-4S] cluster.

It catalyses the reaction 5-amino-1-(5-phospho-beta-D-ribosyl)imidazole + S-adenosyl-L-methionine = 4-amino-2-methyl-5-(phosphooxymethyl)pyrimidine + CO + 5'-deoxyadenosine + formate + L-methionine + 3 H(+). It functions in the pathway cofactor biosynthesis; thiamine diphosphate biosynthesis. Functionally, catalyzes the synthesis of the hydroxymethylpyrimidine phosphate (HMP-P) moiety of thiamine from aminoimidazole ribotide (AIR) in a radical S-adenosyl-L-methionine (SAM)-dependent reaction. This is Phosphomethylpyrimidine synthase from Nitrosococcus oceani (strain ATCC 19707 / BCRC 17464 / JCM 30415 / NCIMB 11848 / C-107).